We begin with the raw amino-acid sequence, 947 residues long: Isoleucine--tRNA ligase (947 aa).

Residues 57-67 (PYANGNIHLGH) carry the 'HIGH' region motif. L-isoleucyl-5'-AMP is bound at residue Glu568. The 'KMSKS' region signature appears at 609-613 (KMSKS). Lys612 contacts ATP. The Zn(2+) site is built by Cys908, Cys911, Cys926, and Cys929.

It belongs to the class-I aminoacyl-tRNA synthetase family. IleS type 1 subfamily. As to quaternary structure, monomer. Zn(2+) is required as a cofactor.

Its subcellular location is the cytoplasm. It carries out the reaction tRNA(Ile) + L-isoleucine + ATP = L-isoleucyl-tRNA(Ile) + AMP + diphosphate. In terms of biological role, catalyzes the attachment of isoleucine to tRNA(Ile). As IleRS can inadvertently accommodate and process structurally similar amino acids such as valine, to avoid such errors it has two additional distinct tRNA(Ile)-dependent editing activities. One activity is designated as 'pretransfer' editing and involves the hydrolysis of activated Val-AMP. The other activity is designated 'posttransfer' editing and involves deacylation of mischarged Val-tRNA(Ile). The chain is Isoleucine--tRNA ligase from Persephonella marina (strain DSM 14350 / EX-H1).